Reading from the N-terminus, the 296-residue chain is Nucleotide-binding protein spr1424 (296 aa).

Position 13–20 (13–20) interacts with ATP; it reads GMGGAGKT. GTP is bound at residue 63–66; sequence DMRS.

It belongs to the RapZ-like family.

Displays ATPase and GTPase activities. This Streptococcus pneumoniae (strain ATCC BAA-255 / R6) protein is Nucleotide-binding protein spr1424.